We begin with the raw amino-acid sequence, 159 residues long: Phosphopantetheine adenylyltransferase (159 aa).

Residue threonine 10 coordinates substrate. ATP contacts are provided by residues threonine 10–phenylalanine 11 and histidine 18. 3 residues coordinate substrate: lysine 42, methionine 74, and arginine 88. ATP is bound by residues glycine 89–arginine 91, glutamate 99, and tryptophan 124–serine 130.

This sequence belongs to the bacterial CoaD family. Homohexamer. It depends on Mg(2+) as a cofactor.

It is found in the cytoplasm. It carries out the reaction (R)-4'-phosphopantetheine + ATP + H(+) = 3'-dephospho-CoA + diphosphate. The protein operates within cofactor biosynthesis; coenzyme A biosynthesis; CoA from (R)-pantothenate: step 4/5. Functionally, reversibly transfers an adenylyl group from ATP to 4'-phosphopantetheine, yielding dephospho-CoA (dPCoA) and pyrophosphate. The chain is Phosphopantetheine adenylyltransferase from Klebsiella pneumoniae subsp. pneumoniae (strain ATCC 700721 / MGH 78578).